The following is a 126-amino-acid chain: Aspartate 1-decarboxylase (126 aa).

The Schiff-base intermediate with substrate; via pyruvic acid role is filled by S25. Position 25 is a pyruvic acid (Ser) (S25). Residue T57 participates in substrate binding. Residue Y58 is the Proton donor of the active site. 73-75 (GAA) provides a ligand contact to substrate.

Belongs to the PanD family. As to quaternary structure, heterooctamer of four alpha and four beta subunits. The cofactor is pyruvate. Post-translationally, is synthesized initially as an inactive proenzyme, which is activated by self-cleavage at a specific serine bond to produce a beta-subunit with a hydroxyl group at its C-terminus and an alpha-subunit with a pyruvoyl group at its N-terminus.

Its subcellular location is the cytoplasm. The enzyme catalyses L-aspartate + H(+) = beta-alanine + CO2. It participates in cofactor biosynthesis; (R)-pantothenate biosynthesis; beta-alanine from L-aspartate: step 1/1. In terms of biological role, catalyzes the pyruvoyl-dependent decarboxylation of aspartate to produce beta-alanine. This is Aspartate 1-decarboxylase from Acetivibrio thermocellus (strain ATCC 27405 / DSM 1237 / JCM 9322 / NBRC 103400 / NCIMB 10682 / NRRL B-4536 / VPI 7372) (Clostridium thermocellum).